Consider the following 113-residue polypeptide: uncharacterized protein (113 aa).

The N-terminal stretch at methionine 1–leucine 29 is a signal peptide. 2 helical membrane passes run threonine 34 to phenylalanine 54 and glutamine 56 to phenylalanine 76.

Its subcellular location is the membrane. This is an uncharacterized protein from Saccharomyces cerevisiae (strain ATCC 204508 / S288c) (Baker's yeast).